A 161-amino-acid polypeptide reads, in one-letter code: uncharacterized protein (161 aa).

Residues 1–16 (MPRAGRAPAEGGPAPG) are compositionally biased toward low complexity. 3 disordered regions span residues 1–23 (MPRA…SRCL), 50–91 (GRPV…TQSA), and 140–161 (RGPA…WRIS).

This is an uncharacterized protein from Homo sapiens (Human).